Consider the following 332-residue polypeptide: MSMHINNVITHLLYKNESEELQLGLRSEPIDSKSPNGEALVVALHRFYGDKPKGFAEFNYQSDFQEQLEKFRLKEINFYEFSSWTVTRLKDELSKYPFADTGVLALVEYSHLATEYLIIALLPIENSIRLDDGLDINITDHVEFSKITIAARINITDFETKANDKYITYIKGRVGRAVSDFFLDCLSACVTLNTKQQNTVLLQAVEDFCSDSKLERDEKESCKKRIFEYCRDQKKNGEDVQLQELSHELPRNNEGHTFFDYTQEQGYELQESFPVDTATVRKLTKYVGAGGGINISFDSILLGERIFYDVETDTLTLKGIPPNLRYQLQSRR.

It belongs to the YejK family.

The protein localises to the cytoplasm. It localises to the nucleoid. The sequence is that of Nucleoid-associated protein VVA0877 from Vibrio vulnificus (strain YJ016).